Consider the following 379-residue polypeptide: MKILRKNHPLLKIVNHSFIDLPTPSNISSWWNFGSLLGMCLIIQILTGLFLAMHYTSDTTTAFSSVAHICRDVNYGWLIRYLHANGASMFFICLFIHVGRGIYYGSYVLSETWNIGIILFLTTMATAFVGYVLPWGQMSFWGATVITNLLSAIPYIGGTLFEWIWGGFSVDKATLARFFAFHFILPFIIAAFALVHLLFLHETGSNNPSGLNSDSDKIPFHPYYTTKDLLGIFLLLLVLMILVLFFPDILGDPDNFTPANPLNTPAHIKPEWYFLFAYAILRSIPNKLGGVLALVLSILILAAFPLLNTSKQHGLIFRPVTQVIYWIFIANLLVLTWIGGQPVEYPFTTIGQIASITYFAIIIILIPVSNTIENNIIKL.

Transmembrane regions (helical) follow at residues 33 to 53, 77 to 98, 113 to 133, and 178 to 198; these read FGSL…FLAM, WLIR…FIHV, WNIG…GYVL, and FFAF…VHLL. Residues His-83 and His-97 each coordinate heme b. The heme b site is built by His-182 and His-196. His-201 contributes to the a ubiquinone binding site. 4 consecutive transmembrane segments (helical) span residues 226–246, 288–308, 320–340, and 347–367; these read TKDL…VLFF, LGGV…PLLN, VTQV…WIGG, and FTTI…ILIP.

The protein belongs to the cytochrome b family. The cytochrome bc1 complex contains 11 subunits: 3 respiratory subunits (MT-CYB, CYC1 and UQCRFS1), 2 core proteins (UQCRC1 and UQCRC2) and 6 low-molecular weight proteins (UQCRH/QCR6, UQCRB/QCR7, UQCRQ/QCR8, UQCR10/QCR9, UQCR11/QCR10 and a cleavage product of UQCRFS1). This cytochrome bc1 complex then forms a dimer. Heme b serves as cofactor.

It is found in the mitochondrion inner membrane. Its function is as follows. Component of the ubiquinol-cytochrome c reductase complex (complex III or cytochrome b-c1 complex) that is part of the mitochondrial respiratory chain. The b-c1 complex mediates electron transfer from ubiquinol to cytochrome c. Contributes to the generation of a proton gradient across the mitochondrial membrane that is then used for ATP synthesis. This is Cytochrome b (MT-CYB) from Akodon cursor (Cursor grass mouse).